The sequence spans 74 residues: Small ribosomal subunit protein eS17 (74 aa).

This sequence belongs to the eukaryotic ribosomal protein eS17 family.

This Ignicoccus hospitalis (strain KIN4/I / DSM 18386 / JCM 14125) protein is Small ribosomal subunit protein eS17.